We begin with the raw amino-acid sequence, 282 residues long: Pantothenate synthetase (282 aa).

ATP is bound at residue 30-37; the sequence is MGALHQGH. His-37 (proton donor) is an active-site residue. (R)-pantoate is bound at residue Gln-61. Residue Gln-61 participates in beta-alanine binding. 149–152 lines the ATP pocket; the sequence is GEKD. Gln-155 provides a ligand contact to (R)-pantoate. ATP-binding positions include Leu-178 and 186–189; that span reads MSSR.

It belongs to the pantothenate synthetase family. In terms of assembly, homodimer.

It localises to the cytoplasm. The enzyme catalyses (R)-pantoate + beta-alanine + ATP = (R)-pantothenate + AMP + diphosphate + H(+). The protein operates within cofactor biosynthesis; (R)-pantothenate biosynthesis; (R)-pantothenate from (R)-pantoate and beta-alanine: step 1/1. Its function is as follows. Catalyzes the condensation of pantoate with beta-alanine in an ATP-dependent reaction via a pantoyl-adenylate intermediate. The chain is Pantothenate synthetase from Flavobacterium psychrophilum (strain ATCC 49511 / DSM 21280 / CIP 103535 / JIP02/86).